Consider the following 390-residue polypeptide: Formate-dependent phosphoribosylglycinamide formyltransferase (390 aa).

N(1)-(5-phospho-beta-D-ribosyl)glycinamide is bound by residues 18-19 and Glu78; that span reads EL. ATP-binding positions include Arg110, Lys151, 156 to 161, 191 to 194, and Glu199; these read SSGKGQ and EEFL. Residues 115 to 305 enclose the ATP-grasp domain; the sequence is DLASKELNIK…EFELHLRAFL (191 aa). Mg(2+) is bound by residues Glu264 and Glu276. Residues Asp283, Lys353, and 360 to 361 contribute to the N(1)-(5-phospho-beta-D-ribosyl)glycinamide site; that span reads RR.

The protein belongs to the PurK/PurT family. As to quaternary structure, homodimer.

The enzyme catalyses N(1)-(5-phospho-beta-D-ribosyl)glycinamide + formate + ATP = N(2)-formyl-N(1)-(5-phospho-beta-D-ribosyl)glycinamide + ADP + phosphate + H(+). It functions in the pathway purine metabolism; IMP biosynthesis via de novo pathway; N(2)-formyl-N(1)-(5-phospho-D-ribosyl)glycinamide from N(1)-(5-phospho-D-ribosyl)glycinamide (formate route): step 1/1. Its function is as follows. Involved in the de novo purine biosynthesis. Catalyzes the transfer of formate to 5-phospho-ribosyl-glycinamide (GAR), producing 5-phospho-ribosyl-N-formylglycinamide (FGAR). Formate is provided by PurU via hydrolysis of 10-formyl-tetrahydrofolate. The sequence is that of Formate-dependent phosphoribosylglycinamide formyltransferase from Prochlorococcus marinus (strain MIT 9515).